The sequence spans 309 residues: Aspartate carbamoyltransferase catalytic subunit (309 aa).

The carbamoyl phosphate site is built by R59 and T60. Residue K87 coordinates L-aspartate. Positions 109, 139, and 142 each coordinate carbamoyl phosphate. L-aspartate contacts are provided by R172 and R224. 2 residues coordinate carbamoyl phosphate: A265 and P266.

It belongs to the aspartate/ornithine carbamoyltransferase superfamily. ATCase family. In terms of assembly, heterododecamer (2C3:3R2) of six catalytic PyrB chains organized as two trimers (C3), and six regulatory PyrI chains organized as three dimers (R2).

It catalyses the reaction carbamoyl phosphate + L-aspartate = N-carbamoyl-L-aspartate + phosphate + H(+). It functions in the pathway pyrimidine metabolism; UMP biosynthesis via de novo pathway; (S)-dihydroorotate from bicarbonate: step 2/3. Catalyzes the condensation of carbamoyl phosphate and aspartate to form carbamoyl aspartate and inorganic phosphate, the committed step in the de novo pyrimidine nucleotide biosynthesis pathway. This Streptococcus uberis (strain ATCC BAA-854 / 0140J) protein is Aspartate carbamoyltransferase catalytic subunit.